Consider the following 385-residue polypeptide: Succinate--CoA ligase [ADP-forming] subunit beta (385 aa).

The ATP-grasp domain maps to 9 to 244 (KEILRKYGVP…QDEEDPLETR (236 aa)). Residues lysine 46, 53–55 (GRG), glutamate 99, cysteine 102, and glutamate 107 each bind ATP. Residues asparagine 199 and aspartate 213 each coordinate Mg(2+). Substrate contacts are provided by residues asparagine 264 and 321–323 (GIM).

It belongs to the succinate/malate CoA ligase beta subunit family. In terms of assembly, heterotetramer of two alpha and two beta subunits. Mg(2+) serves as cofactor.

It carries out the reaction succinate + ATP + CoA = succinyl-CoA + ADP + phosphate. The catalysed reaction is GTP + succinate + CoA = succinyl-CoA + GDP + phosphate. It participates in carbohydrate metabolism; tricarboxylic acid cycle; succinate from succinyl-CoA (ligase route): step 1/1. In terms of biological role, succinyl-CoA synthetase functions in the citric acid cycle (TCA), coupling the hydrolysis of succinyl-CoA to the synthesis of either ATP or GTP and thus represents the only step of substrate-level phosphorylation in the TCA. The beta subunit provides nucleotide specificity of the enzyme and binds the substrate succinate, while the binding sites for coenzyme A and phosphate are found in the alpha subunit. The protein is Succinate--CoA ligase [ADP-forming] subunit beta of Rickettsia bellii (strain RML369-C).